The following is a 193-amino-acid chain: Ion-translocating oxidoreductase complex subunit A (193 aa).

6 helical membrane passes run 5–25, 47–67, 72–92, 102–122, 134–154, and 171–191; these read LLLF…FLGL, FVMT…LVPL, LRTL…EMVV, LLGI…VALL, AVYG…FAAI, and SIAL…TGLV.

It belongs to the NqrDE/RnfAE family. The complex is composed of six subunits: RnfA, RnfB, RnfC, RnfD, RnfE and RnfG.

The protein resides in the cell inner membrane. Its function is as follows. Part of a membrane-bound complex that couples electron transfer with translocation of ions across the membrane. This is Ion-translocating oxidoreductase complex subunit A from Serratia proteamaculans (strain 568).